A 73-amino-acid chain; its full sequence is Translation initiation factor IF-1 (73 aa).

The S1-like domain maps to 1-73; it reads MAKKDGVIEI…TRGRIVYRYK (73 aa).

This sequence belongs to the IF-1 family. Component of the 30S ribosomal translation pre-initiation complex which assembles on the 30S ribosome in the order IF-2 and IF-3, IF-1 and N-formylmethionyl-tRNA(fMet); mRNA recruitment can occur at any time during PIC assembly.

The protein localises to the cytoplasm. Functionally, one of the essential components for the initiation of protein synthesis. Stabilizes the binding of IF-2 and IF-3 on the 30S subunit to which N-formylmethionyl-tRNA(fMet) subsequently binds. Helps modulate mRNA selection, yielding the 30S pre-initiation complex (PIC). Upon addition of the 50S ribosomal subunit IF-1, IF-2 and IF-3 are released leaving the mature 70S translation initiation complex. The protein is Translation initiation factor IF-1 of Paenarthrobacter aurescens (strain TC1).